The following is a 462-amino-acid chain: Glycerol-3-phosphate dehydrogenase [NAD(+)] GPDHC1, cytosolic (462 aa).

NAD(+)-binding positions include 48–53 (GAGAWG), Lys196, and Ala235. Residue Lys196 participates in substrate binding. Lys285 functions as the Proton acceptor in the catalytic mechanism. Residues Arg347 and Gln375 each coordinate NAD(+). 347–348 (RN) is a substrate binding site.

The protein belongs to the NAD-dependent glycerol-3-phosphate dehydrogenase family. Expressed in roots, leaves, flowers and siliques.

It localises to the cytoplasm. It is found in the cytosol. The enzyme catalyses sn-glycerol 3-phosphate + NAD(+) = dihydroxyacetone phosphate + NADH + H(+). Involved in cell redox homeostasis. Required for maintaining a steady state cellular NADH/NAD(+) ratio through a mitochondrial glycerol-3-phosphate redox shuttle. May function with the mitochondrial FAD-dependent glycerol-3-phosphate dehydrogenase SDP6 to shuttle reducing equivalents into the mitochondria for respiration. The chain is Glycerol-3-phosphate dehydrogenase [NAD(+)] GPDHC1, cytosolic (GPDHC1) from Arabidopsis thaliana (Mouse-ear cress).